The following is a 178-amino-acid chain: FXYD domain-containing ion transport regulator 5 (178 aa).

An N-terminal signal peptide occupies residues 1–21; the sequence is MSPPSQLCLLTIVALILPSEG. The tract at residues 21 to 126 is disordered; that stretch reads GQTPEKPRSS…YMPPSYIENP (106 aa). Over 22-146 the chain is Extracellular; that stretch reads QTPEKPRSSF…YDNTTLRKRG (125 aa). Positions 29–58 are enriched in polar residues; that stretch reads SSFTAHQSSVTTHVPVPDQTSPGVQTTPPI. A compositionally biased stretch (low complexity) spans 70 to 79; that stretch reads QTAAKTKTQQ. The chain crosses the membrane as a helical span at residues 147–164; that stretch reads LLVAAVLFITGIIILTSG. Residues 165-178 are Cytoplasmic-facing; sequence KCRQFSQLCLNRHR.

It belongs to the FXYD family. As to quaternary structure, regulatory subunit of the sodium/potassium-transporting ATPase which is composed of a catalytic alpha subunit, a non-catalytic beta subunit and an additional regulatory subunit. The regulatory subunit, a member of the FXYD protein family, modulates the enzymatic activity in a tissue- and isoform-specific way by changing affinities of the Na+/K+-ATPase toward Na(+), K(+) or ATP. In terms of processing, glycosylated. In terms of tissue distribution, spleen, lung, skeletal muscle, and testis.

The protein localises to the cell membrane. Its subcellular location is the basolateral cell membrane. Its function is as follows. Associates with and regulates the activity of the sodium/potassium-transporting ATPase (NKA) which catalyzes the hydrolysis of ATP coupled with the exchange of Na(+) and K(+) ions across the plasma membrane. May increase NKA activity by increasing the apparent affinity for Na(+). Involved in down-regulation of E-cadherin which results in reduced cell adhesion. Promotes metastasis. In Rattus norvegicus (Rat), this protein is FXYD domain-containing ion transport regulator 5 (Fxyd5).